Here is a 280-residue protein sequence, read N- to C-terminus: Bifunctional protein FolD (280 aa).

Residues G166–S168 and S191 contribute to the NADP(+) site.

This sequence belongs to the tetrahydrofolate dehydrogenase/cyclohydrolase family. In terms of assembly, homodimer.

The catalysed reaction is (6R)-5,10-methylene-5,6,7,8-tetrahydrofolate + NADP(+) = (6R)-5,10-methenyltetrahydrofolate + NADPH. It catalyses the reaction (6R)-5,10-methenyltetrahydrofolate + H2O = (6R)-10-formyltetrahydrofolate + H(+). It functions in the pathway one-carbon metabolism; tetrahydrofolate interconversion. In terms of biological role, catalyzes the oxidation of 5,10-methylenetetrahydrofolate to 5,10-methenyltetrahydrofolate and then the hydrolysis of 5,10-methenyltetrahydrofolate to 10-formyltetrahydrofolate. The protein is Bifunctional protein FolD of Cellvibrio japonicus (strain Ueda107) (Pseudomonas fluorescens subsp. cellulosa).